A 351-amino-acid chain; its full sequence is NAD-dependent protein deacetylase SIR2rp1 (351 aa).

The Deacetylase sirtuin-type domain maps to 10–325 (HVVGEPTFEG…RSFAQALGFG (316 aa)). Residues 37–57 (GAGISVAAGIPDFRSPHTGLY) and 122–125 (QNID) contribute to the NAD(+) site. H142 functions as the Proton acceptor in the catalytic mechanism. Positions 150, 153, 174, and 177 each coordinate Zn(2+). Residues 213-215 (GTS) and 238-240 (NLE) contribute to the NAD(+) site. The tract at residues 260-284 (SSYRLSTGNGNGSKISSGDSSNSSS) is disordered. Positions 265-284 (STGNGNGSKISSGDSSNSSS) are enriched in low complexity. An NAD(+)-binding site is contributed by C311.

This sequence belongs to the sirtuin family. Class I subfamily. The cofactor is Zn(2+).

The protein resides in the nucleus. The protein localises to the chromosome. Its subcellular location is the telomere. The enzyme catalyses N(6)-acetyl-L-lysyl-[protein] + NAD(+) + H2O = 2''-O-acetyl-ADP-D-ribose + nicotinamide + L-lysyl-[protein]. In terms of biological role, NAD-dependent protein deacetylase, which is involved in repression of RNA polymerase I-mediated expression immediately adjacent to telomeres. It is however not involved in antigenic variation and subtelomeric variant surface glycoprotein (VSG) gene silencing. Plays a role in DNA damage response. Also has ADP-ribosylation activity in vitro. In Trypanosoma brucei brucei (strain 927/4 GUTat10.1), this protein is NAD-dependent protein deacetylase SIR2rp1 (SIR2rp1).